The following is a 323-amino-acid chain: Acetyl esterase (323 aa).

The short motif at 91–93 (HGG) is the Involved in the stabilization of the negatively charged intermediate by the formation of the oxyanion hole element. Catalysis depends on residues S165, D262, and H292.

Belongs to the 'GDXG' lipolytic enzyme family. As to quaternary structure, homodimer. Interacts with MalT and MelA.

Its subcellular location is the cytoplasm. In terms of biological role, displays esterase activity towards short chain fatty esters (acyl chain length of up to 8 carbons). Able to hydrolyze triacetylglycerol (triacetin) and tributyrylglycerol (tributyrin), but not trioleylglycerol (triolein) or cholesterol oleate. Negatively regulates MalT activity by antagonizing maltotriose binding. Inhibits MelA galactosidase activity. The protein is Acetyl esterase of Salmonella typhi.